Reading from the N-terminus, the 155-residue chain is Transcriptional repressor NrdR (155 aa).

The segment at Cys3–Cys34 is a zinc-finger region. In terms of domain architecture, ATP-cone spans Leu49–Val139.

Belongs to the NrdR family. Zn(2+) serves as cofactor.

Functionally, negatively regulates transcription of bacterial ribonucleotide reductase nrd genes and operons by binding to NrdR-boxes. The chain is Transcriptional repressor NrdR from Exiguobacterium sp. (strain ATCC BAA-1283 / AT1b).